The chain runs to 79 residues: Serine rich endogenous peptide 2 (79 aa).

The first 19 residues, 1–19 (MANNLGLVILLLVIVLVSC), serve as a signal peptide directing secretion. The tract at residues 25-79 (CALASPQKSRPSSEWRRKLIPVRSSRSPRSPSFAPKKPPPPPPSPPLSPSSPPSN) is disordered. Residues 45–57 (PVRSSRSPRSPSF) carry the SCOOP motif motif. Residues 45–59 (PVRSSRSPRSPSFAP) are compositionally biased toward low complexity. A SxS motif essential for MIK2 binding motif is present at residues 49 to 51 (SRS). The span at 60 to 79 (KKPPPPPPSPPLSPSSPPSN) shows a compositional bias: pro residues.

It belongs to the serine rich endogenous peptide (SCOOP) phytocytokine family. Interacts with MIK2 (via extracellular leucine-rich repeat domain); this interaction triggers the formation of complex between MIK2 and the BAK1/SERK3 and SERK4 coreceptors, and subsequent BAK1 activation by phosphorylation.

Its subcellular location is the cell membrane. It is found in the secreted. The protein localises to the extracellular space. It localises to the apoplast. Its function is as follows. Brassicaceae-specific phytocytokine (plant endogenous peptide released into the apoplast) perceived by MIK2 in a BAK1/SERK3 and SERK4 coreceptors-dependent manner, that modulates various physiological and antimicrobial processes including growth prevention and reactive oxygen species (ROS) response regulation. This Arabidopsis thaliana (Mouse-ear cress) protein is Serine rich endogenous peptide 2.